An 880-amino-acid chain; its full sequence is Translation initiation factor IF-2 (880 aa).

Basic and acidic residues-rich tracts occupy residues 34 to 43 (HMSSLDDKQV), 59 to 69 (TEKDSKNSSRK), 82 to 94 (RRRD…DNRH), 110 to 131 (NRRE…DLLN), 167 to 181 (KKVE…EKLE), 230 to 240 (QKEETKPTRKK), and 248 to 261 (EVPD…EHSD). The disordered stretch occupies residues 34–297 (HMSSLDDKQV…KERPLPETLV (264 aa)). Residues 262-275 (KARRRRNKKNKRIN) show a composition bias toward basic residues. Over residues 276-292 (QSKEVKKQPTQRKERPL) the composition is skewed to basic and acidic residues. The region spanning 381–550 (KRPPVVTIMG…LLQADVMELK (170 aa)) is the tr-type G domain. Positions 390–397 (GHVDHGKT) are G1. 390–397 (GHVDHGKT) contributes to the GTP binding site. Positions 415 to 419 (GITQR) are G2. A G3 region spans residues 436–439 (DTPG). GTP is bound by residues 436-440 (DTPGH) and 490-493 (NKID). The interval 490-493 (NKID) is G4. A G5 region spans residues 526–528 (SAK).

Belongs to the TRAFAC class translation factor GTPase superfamily. Classic translation factor GTPase family. IF-2 subfamily.

Its subcellular location is the cytoplasm. One of the essential components for the initiation of protein synthesis. Protects formylmethionyl-tRNA from spontaneous hydrolysis and promotes its binding to the 30S ribosomal subunits. Also involved in the hydrolysis of GTP during the formation of the 70S ribosomal complex. This chain is Translation initiation factor IF-2, found in Lactobacillus johnsonii (strain CNCM I-12250 / La1 / NCC 533).